A 1070-amino-acid chain; its full sequence is DNA-directed RNA polymerase subunit beta (1070 aa).

The protein belongs to the RNA polymerase beta chain family. In terms of assembly, in plastids the minimal PEP RNA polymerase catalytic core is composed of four subunits: alpha, beta, beta', and beta''. When a (nuclear-encoded) sigma factor is associated with the core the holoenzyme is formed, which can initiate transcription.

It localises to the plastid. Its subcellular location is the chloroplast. The enzyme catalyses RNA(n) + a ribonucleoside 5'-triphosphate = RNA(n+1) + diphosphate. In terms of biological role, DNA-dependent RNA polymerase catalyzes the transcription of DNA into RNA using the four ribonucleoside triphosphates as substrates. In Phalaenopsis aphrodite subsp. formosana (Moth orchid), this protein is DNA-directed RNA polymerase subunit beta.